A 373-amino-acid polypeptide reads, in one-letter code: Packaging protein 3 (373 aa).

The segment at 1 to 32 (MHPVLRQMRPQPRATTASAAVALSGSGEQEEP) is disordered. The segment at 1 to 150 (MHPVLRQMRP…VTEERNFQKS (150 aa)) is interaction with packaging protein 1. A phosphoserine; by host mark is found at Ser-52 and Ser-334.

This sequence belongs to the adenoviridae packaging protein 3 family. In terms of assembly, part of the genome packaging complex composed of packaging proteins 1, 2 and 3; this complex specifically binds to the packaging sequence on the left end of viral genomic DNA and performs packaging of the viral genome. Interacts with hexon-linking protein IIIa; this interaction is required to promote correct genome packaging. Post-translationally, cleaved at different sites by the viral protease during virion maturation.

The protein resides in the host nucleus. Functionally, involved in viral genome packaging through its interaction with packaging proteins 1 and 2. After proteolytic cleavage by adenovirus protease, L1 52/55k protein is removed from the capsid during viral maturation. The sequence is that of Packaging protein 3 from Homo sapiens (Human).